The chain runs to 378 residues: Glutamate 5-kinase (378 aa).

ATP is bound at residue lysine 14. Substrate contacts are provided by serine 54, aspartate 141, and asparagine 153. 173 to 174 contributes to the ATP binding site; sequence SD. Residues 279-356 enclose the PUA domain; that stretch reads AGRLTVDAGA…DEISAILGYD (78 aa).

Belongs to the glutamate 5-kinase family.

It localises to the cytoplasm. It catalyses the reaction L-glutamate + ATP = L-glutamyl 5-phosphate + ADP. Its pathway is amino-acid biosynthesis; L-proline biosynthesis; L-glutamate 5-semialdehyde from L-glutamate: step 1/2. Catalyzes the transfer of a phosphate group to glutamate to form L-glutamate 5-phosphate. The sequence is that of Glutamate 5-kinase from Brucella canis (strain ATCC 23365 / NCTC 10854 / RM-666).